A 425-amino-acid chain; its full sequence is Serine hydroxymethyltransferase (425 aa).

(6S)-5,6,7,8-tetrahydrofolate-binding positions include L125 and 129-131 (GHL). K234 is modified (N6-(pyridoxal phosphate)lysine).

The protein belongs to the SHMT family. Homodimer. Pyridoxal 5'-phosphate is required as a cofactor.

Its subcellular location is the cytoplasm. The enzyme catalyses (6R)-5,10-methylene-5,6,7,8-tetrahydrofolate + glycine + H2O = (6S)-5,6,7,8-tetrahydrofolate + L-serine. Its pathway is one-carbon metabolism; tetrahydrofolate interconversion. It functions in the pathway amino-acid biosynthesis; glycine biosynthesis; glycine from L-serine: step 1/1. In terms of biological role, catalyzes the reversible interconversion of serine and glycine with tetrahydrofolate (THF) serving as the one-carbon carrier. This reaction serves as the major source of one-carbon groups required for the biosynthesis of purines, thymidylate, methionine, and other important biomolecules. Also exhibits THF-independent aldolase activity toward beta-hydroxyamino acids, producing glycine and aldehydes, via a retro-aldol mechanism. The protein is Serine hydroxymethyltransferase of Marinomonas sp. (strain MWYL1).